The chain runs to 366 residues: MGRHSCCYKQKLRKGLWSPEEDEKLLTHITNHGHGCWSSVPKLAGLQRCGKSCRLRWINYLRPDLKRGAFSPEEENLIVELHAVLGNRWSQIASRLPGRTDNEIKNLWNSSIKKKLKQRGIDPNTHKPISEVESFSDKDKPTTSNNKRSGNDHKSPSSSSATNQDFFLERPSDLSDYFGFQKLNFNSNLGLSVTTDSSLCSMIPPQFSPGNMVGSVLQTPVCVKPSISLPPDNNSSSPISGGDHVKLAAPNWEFQTNNNNTSNFFDNGGFSWSIPNSSTSSSQVKPNHNFEEIKWSEYLNTPFFIGSTVQSQTSQPIYIKSETDYLANVSNMTDPWSQNENLGTTETSDVFSKDLQRMAVSFGQSL.

2 HTH myb-type domains span residues 9 to 61 (KQKL…INYL) and 62 to 116 (RPDL…KKKL). 2 consecutive DNA-binding regions (H-T-H motif) follow at residues 37 to 61 (WSSVPKLAGLQRCGKSCRLRWINYL) and 89 to 112 (WSQIASRLPGRTDNEIKNLWNSSI). Residues 115 to 164 (KLKQRGIDPNTHKPISEVESFSDKDKPTTSNNKRSGNDHKSPSSSSATNQ) form a disordered region. The segment covering 124–141 (NTHKPISEVESFSDKDKP) has biased composition (basic and acidic residues).

Expressed specifically in guard cells. Expressed in sink tissues, such as xylem, roots and developing seeds.

The protein resides in the nucleus. In terms of biological role, transcription factor that coordinates a small network of downstream target genes required for several aspects of plant growth and development, such as xylem formation and xylem cell differentiation, and lateral root formation. Regulates a specific set of target genes by binding DNA to the AC cis-element 5'-ACCTAC-3'. Functions as a transcriptional regulator of stomatal closure. Plays a role the regulation of stomatal pore size independently of abscisic acid (ABA). Required for seed coat mucilage deposition during the development of the seed coat epidermis. Involved in the induction of trichome initiation and branching by positively regulating GL1 and GL2. Required for gibberellin (GA) biosynthesis and degradation by positively affecting the expression of the enzymes that convert GA9 into the bioactive GA4, as well as the enzymes involved in the degradation of GA4. In Arabidopsis thaliana (Mouse-ear cress), this protein is Transcription factor MYB61.